We begin with the raw amino-acid sequence, 126 residues long: MDNQLEIELNPTEILKKEFKSKMRGYDPEEVDGYLDLVIKDYQTYQENIDRLTADNTRLFNKVEELNRQLSASDSVKEVKPQQASAATNYDILKRLSNLERHVFGAKLSDQNGAAQTRVQNHSQFD.

Residues Leu-35–Ala-72 are a coiled coil.

The protein belongs to the GpsB family. Forms polymers through the coiled coil domains. Interacts with PBP1, MreC and EzrA.

The protein resides in the cytoplasm. Divisome component that associates with the complex late in its assembly, after the Z-ring is formed, and is dependent on DivIC and PBP2B for its recruitment to the divisome. Together with EzrA, is a key component of the system that regulates PBP1 localization during cell cycle progression. Its main role could be the removal of PBP1 from the cell pole after pole maturation is completed. Also contributes to the recruitment of PBP1 to the division complex. Not essential for septum formation. In Latilactobacillus sakei subsp. sakei (strain 23K) (Lactobacillus sakei subsp. sakei), this protein is Cell cycle protein GpsB.